A 189-amino-acid polypeptide reads, in one-letter code: Large ribosomal subunit protein bL17 (189 aa).

The protein belongs to the bacterial ribosomal protein bL17 family. Part of the 50S ribosomal subunit. Contacts protein L32.

The protein is Large ribosomal subunit protein bL17 of Rhodococcus jostii (strain RHA1).